We begin with the raw amino-acid sequence, 395 residues long: Formate-dependent phosphoribosylglycinamide formyltransferase (395 aa).

N(1)-(5-phospho-beta-D-ribosyl)glycinamide is bound by residues 22–23 (EL) and Glu82. ATP-binding positions include Arg115, Lys156, 161 to 166 (SSGKGQ), 196 to 199 (EGFI), and Glu204. Residues 120 to 309 (RLAAETLGLP…EFALHARAIL (190 aa)) form the ATP-grasp domain. Mg(2+) is bound by residues Glu268 and Glu280. Residues Asp287, Lys356, and 363–364 (RR) contribute to the N(1)-(5-phospho-beta-D-ribosyl)glycinamide site.

Belongs to the PurK/PurT family. Homodimer.

It carries out the reaction N(1)-(5-phospho-beta-D-ribosyl)glycinamide + formate + ATP = N(2)-formyl-N(1)-(5-phospho-beta-D-ribosyl)glycinamide + ADP + phosphate + H(+). It participates in purine metabolism; IMP biosynthesis via de novo pathway; N(2)-formyl-N(1)-(5-phospho-D-ribosyl)glycinamide from N(1)-(5-phospho-D-ribosyl)glycinamide (formate route): step 1/1. Involved in the de novo purine biosynthesis. Catalyzes the transfer of formate to 5-phospho-ribosyl-glycinamide (GAR), producing 5-phospho-ribosyl-N-formylglycinamide (FGAR). Formate is provided by PurU via hydrolysis of 10-formyl-tetrahydrofolate. The sequence is that of Formate-dependent phosphoribosylglycinamide formyltransferase from Stenotrophomonas maltophilia (strain R551-3).